Reading from the N-terminus, the 306-residue chain is Ribonuclease Z (306 aa).

The Zn(2+) site is built by histidine 63, histidine 65, aspartate 67, histidine 68, histidine 141, aspartate 208, and histidine 266. The Proton acceptor role is filled by aspartate 67.

Belongs to the RNase Z family. In terms of assembly, homodimer. Requires Zn(2+) as cofactor.

The catalysed reaction is Endonucleolytic cleavage of RNA, removing extra 3' nucleotides from tRNA precursor, generating 3' termini of tRNAs. A 3'-hydroxy group is left at the tRNA terminus and a 5'-phosphoryl group is left at the trailer molecule.. Zinc phosphodiesterase, which displays some tRNA 3'-processing endonuclease activity. Probably involved in tRNA maturation, by removing a 3'-trailer from precursor tRNA. This Protochlamydia amoebophila (strain UWE25) protein is Ribonuclease Z.